A 431-amino-acid chain; its full sequence is Histidinol dehydrogenase (431 aa).

Residues Y129, Q191, and N214 each contribute to the NAD(+) site. Substrate-binding residues include S237, Q259, and H262. Residues Q259 and H262 each coordinate Zn(2+). Catalysis depends on proton acceptor residues E327 and H328. Residues H328, D361, E415, and H420 each contribute to the substrate site. Residue D361 participates in Zn(2+) binding. Residue H420 coordinates Zn(2+).

Belongs to the histidinol dehydrogenase family. Zn(2+) serves as cofactor.

The enzyme catalyses L-histidinol + 2 NAD(+) + H2O = L-histidine + 2 NADH + 3 H(+). It functions in the pathway amino-acid biosynthesis; L-histidine biosynthesis; L-histidine from 5-phospho-alpha-D-ribose 1-diphosphate: step 9/9. Functionally, catalyzes the sequential NAD-dependent oxidations of L-histidinol to L-histidinaldehyde and then to L-histidine. This Lactococcus lactis subsp. lactis (strain IL1403) (Streptococcus lactis) protein is Histidinol dehydrogenase (hisD).